A 383-amino-acid polypeptide reads, in one-letter code: S-adenosylmethionine:tRNA ribosyltransferase-isomerase (383 aa).

The protein belongs to the QueA family. As to quaternary structure, monomer.

Its subcellular location is the cytoplasm. The enzyme catalyses 7-aminomethyl-7-carbaguanosine(34) in tRNA + S-adenosyl-L-methionine = epoxyqueuosine(34) in tRNA + adenine + L-methionine + 2 H(+). It participates in tRNA modification; tRNA-queuosine biosynthesis. Transfers and isomerizes the ribose moiety from AdoMet to the 7-aminomethyl group of 7-deazaguanine (preQ1-tRNA) to give epoxyqueuosine (oQ-tRNA). This Rickettsia prowazekii (strain Madrid E) protein is S-adenosylmethionine:tRNA ribosyltransferase-isomerase.